We begin with the raw amino-acid sequence, 112 residues long: Conotoxin vil14.5 (112 aa).

Residues 1–22 form the signal peptide; that stretch reads MGFRVLVLVVMATTSALPFTFS. A propeptide spanning residues 23 to 85 is cleaved from the precursor; that stretch reads EEPGRSPFRP…FAELSVGQRR (63 aa). The interval 53–74 is disordered; that stretch reads RADGQPPDMRQPEMRRPEVRQP. The segment covering 62–74 has biased composition (basic and acidic residues); the sequence is RQPEMRRPEVRQP. 2 cysteine pairs are disulfide-bonded: Cys91-Cys111 and Cys95-Cys107.

Belongs to the conotoxin R superfamily. Expressed by the venom duct.

It localises to the secreted. The protein is Conotoxin vil14.5 of Conus villepinii (Villepin's cone).